We begin with the raw amino-acid sequence, 414 residues long: Probable sugar-binding periplasmic protein (414 aa).

A signal peptide spans 1 to 22 (MRKFMTTTAVAALMLAATAARA).

It belongs to the bacterial solute-binding protein 1 family.

The protein resides in the periplasm. In terms of biological role, part of a binding-protein-dependent transport system for a sugar. The chain is Probable sugar-binding periplasmic protein from Rhizobium meliloti (strain 1021) (Ensifer meliloti).